A 255-amino-acid chain; its full sequence is Ribonuclease HII (255 aa).

One can recognise an RNase H type-2 domain in the interval 72-255 (AIICGIDEVG…KSFEPIKSLL (184 aa)). Residues aspartate 78, glutamate 79, and aspartate 170 each coordinate a divalent metal cation.

The protein belongs to the RNase HII family. Mn(2+) is required as a cofactor. Requires Mg(2+) as cofactor.

It is found in the cytoplasm. The enzyme catalyses Endonucleolytic cleavage to 5'-phosphomonoester.. Endonuclease that specifically degrades the RNA of RNA-DNA hybrids. This is Ribonuclease HII from Staphylococcus aureus (strain USA300).